Consider the following 177-residue polypeptide: Large ribosomal subunit protein uL6 (177 aa).

It belongs to the universal ribosomal protein uL6 family. Part of the 50S ribosomal subunit.

In terms of biological role, this protein binds to the 23S rRNA, and is important in its secondary structure. It is located near the subunit interface in the base of the L7/L12 stalk, and near the tRNA binding site of the peptidyltransferase center. This chain is Large ribosomal subunit protein uL6, found in Actinobacillus pleuropneumoniae serotype 5b (strain L20).